The chain runs to 242 residues: uncharacterized protein (242 aa).

The region spanning 2-62 is the S4 RNA-binding domain; it reads EKAYKILSVQ…VEKPSVIFED (61 aa). Residue Asp93 is part of the active site.

Belongs to the pseudouridine synthase RluA family.

It catalyses the reaction a uridine in RNA = a pseudouridine in RNA. This is an uncharacterized protein from Helicobacter pylori (strain ATCC 700392 / 26695) (Campylobacter pylori).